Reading from the N-terminus, the 82-residue chain is Short neurotoxin OKI-10 (82 aa).

The N-terminal stretch at 1 to 20 (KTLLLTLVVVTIVCLDLGYT) is a signal peptide. Disulfide bonds link C23-C44, C37-C61, C63-C74, and C75-C80.

This sequence belongs to the three-finger toxin family. Short-chain subfamily. Type I alpha-neurotoxin sub-subfamily. In terms of tissue distribution, expressed by the venom gland.

Its subcellular location is the secreted. Binds to muscle nicotinic acetylcholine receptor (nAChR) and inhibit acetylcholine from binding to the receptor, thereby impairing neuromuscular transmission. This is Short neurotoxin OKI-10 from Laticauda laticaudata (Blue-ringed sea krait).